An 806-amino-acid polypeptide reads, in one-letter code: Mitogen-activated protein kinase 7 (806 aa).

A disordered region spans residues 1 to 23 (MAEPLKEEDGEDGSGEPPGRVKA). A2 is subject to N-acetylalanine. The tract at residues 2-77 (AEPLKEEDGE…VVSSARRRLT (76 aa)) is required for cytoplasmic targeting. Residues 55–347 (YEIIETIGNG…AAAALRHPFL (293 aa)) enclose the Protein kinase domain. ATP-binding positions include 61 to 69 (IGNGAYGVV) and K84. The segment at 78–139 (GQQVAIKKIP…FRSVYVVLDL (62 aa)) is required for binding to MAP2K5. Residues 140-406 (MESDLHQIIH…QQIRFQPSLQ (267 aa)) are necessary for oligomerization. The active-site Proton acceptor is the D182. The TXY signature appears at 219–221 (TEY). A may not be required for kinase activity; required to stimulate MEF2C activity region spans residues 407 to 806 (PVASEPVCPD…LSDLPDLQEP (400 aa)). 2 disordered regions span residues 424–475 (APSG…SDNT) and 488–727 (RSRL…PKGS). Positions 433–443 (SPPPALPPCSG) are enriched in pro residues. Composition is skewed to basic and acidic residues over residues 502–519 (PEPR…EREE), 527–544 (RAKE…KERG), and 563–573 (DNDRSLLERWT). The short motif at 505 to 539 (RKPVTAQERQREREEKRRRRQERAKEREKRRQERE) is the Nuclear localization signal element. Pro residues-rich tracts occupy residues 578–592 (PPVP…PTPK) and 627–643 (VCPP…PVPA). The segment covering 647-660 (TAPSTSLLASQSLV) has biased composition (polar residues). The segment covering 678–689 (PSGPPPPDPGLT) has biased composition (pro residues). Polar residues predominate over residues 693-710 (STSESPDVNLVTQQLSKS). Position 710 is a phosphoserine (S710). T723 carries the post-translational modification Phosphothreonine.

The protein belongs to the protein kinase superfamily. CMGC Ser/Thr protein kinase family. MAP kinase subfamily. Interacts with MAP2K5. Forms oligomers. Interacts with MEF2A, MEF2C and MEF2D; the interaction phosphorylates the MEF2s and enhances transcriptional activity of MEF2A, MEF2C but not MEF2D. Interacts with SGK1. Interacts with PML. Interacts (via N-terminal half) with HSP90AB1-CDC37 chaperone complex in resting cells; the interaction is MAP2K5-independent and prevents MAPK7 from ubiquitination and proteasomal degradation. Interacts with STUB1/CHIP; the interaction is enhanced in the presence of IGF1 or MAP2K5 and promotes STUB1/CHIP E3 ligase activity. Mg(2+) is required as a cofactor. In terms of processing, dually phosphorylated on Thr-219 and Tyr-221, which activates the enzyme.

The protein localises to the cytoplasm. It is found in the nucleus. The protein resides in the PML body. The enzyme catalyses L-seryl-[protein] + ATP = O-phospho-L-seryl-[protein] + ADP + H(+). It carries out the reaction L-threonyl-[protein] + ATP = O-phospho-L-threonyl-[protein] + ADP + H(+). With respect to regulation, activated by tyrosine and threonine phosphorylation. Activated in response to hyperosmolarity, hydrogen peroxide, and epidermal growth factor (EGF). In terms of biological role, plays a role in various cellular processes such as proliferation, differentiation and cell survival. The upstream activator of MAPK7 is the MAPK kinase MAP2K5. Upon activation, it translocates to the nucleus and phosphorylates various downstream targets including MEF2C. EGF activates MAPK7 through a Ras-independent and MAP2K5-dependent pathway. As part of the MAPK/ERK signaling pathway, acts as a negative regulator of apoptosis in cardiomyocytes via interaction with STUB1/CHIP and promotion of STUB1-mediated ubiquitination and degradation of ICER-type isoforms of CREM. May have a role in muscle cell differentiation. May be important for endothelial function and maintenance of blood vessel integrity. MAP2K5 and MAPK7 interact specifically with one another and not with MEK1/ERK1 or MEK2/ERK2 pathways. Phosphorylates SGK1 at Ser-78 and this is required for growth factor-induced cell cycle progression. Involved in the regulation of p53/TP53 by disrupting the PML-MDM2 interaction. This is Mitogen-activated protein kinase 7 (Mapk7) from Rattus norvegicus (Rat).